The primary structure comprises 1260 residues: Agglutinin-like protein 1 (1260 aa).

The N-terminal stretch at 1-17 (MLQQFTLLFLYLSIASA) is a signal peptide. Intrachain disulfides connect Cys-73–Cys-150, Cys-96–Cys-112, Cys-205–Cys-298, and Cys-227–Cys-256. Tandem repeats lie at residues 433 to 468 (SPNPTVSTTEYWSQSFATTTTVTAPPGGTDTVIIRE), 469 to 504 (PPNHTVTTTEYWSQSFATTTTVTAPPGGTDSVIIRE), 505 to 540 (PPNPTVTTTEYWSQSFATTTTVTAPPGGTDSVIIRE), 541 to 576 (PPNPTVTTTEYWSQSYATTTTVTAPPGGTDSVIIRE), 577 to 612 (PPNHTVTTTEYWSQSYATTTTVTAPPGGTDTVIIRE), 613 to 648 (PPNHTVTTTEYWSQSFATTTTVTGPPSGTDTVIIRE), 649 to 684 (PPNPTVTTTEYWSQSYATTTTITAPPGETDTVLIRE), 685 to 720 (PPNHTVTTTEYWSQSYATTTTVTAPPGETDTVLIRE), 721 to 756 (PPNHTVTTTEYWSQSYATTTTVTAPPGGTDTVIIRE), and 757 to 792 (PPNPTVTTTEYWSQSFATTTTVTAPPGGTDTVIIYE). Residues 433 to 792 (SPNPTVSTTE…GGTDTVIIYE (360 aa)) form a 10 X 36 AA tandem repeats region. An N-linked (GlcNAc...) asparagine glycan is attached at Asn-471. Residues Asn-579 and Asn-615 are each glycosylated (N-linked (GlcNAc...) asparagine). Asn-687 and Asn-723 each carry an N-linked (GlcNAc...) asparagine glycan. Residues Asn-820, Asn-886, Asn-918, and Asn-973 are each glycosylated (N-linked (GlcNAc...) asparagine). Composition is skewed to polar residues over residues 896–918 (PTASTMSDSLSSTDGISATSSDN) and 964–979 (KVTFTSNGDNQSGTHD). Disordered regions lie at residues 896–924 (PTASTMSDSLSSTDGISATSSDNVSKSGV) and 954–1226 (SIPS…SSSP). Residues 980-995 (SQSTSTEIEIVTTSST) show a composition bias toward low complexity. One copy of the 2-1 repeat lies at 983–1043 (TSTEIEIVTT…TTSQPTGDNG (61 aa)). The segment at 983 to 1152 (TSTEIEIVTT…ATTQATNENG (170 aa)) is 2 X 26 AA approximate repeats. Polar residues predominate over residues 1002–1062 (VSSNTDLTSE…PTVATSTLAS (61 aa)). N-linked (GlcNAc...) asparagine glycans are attached at residues Asn-1045 and Asn-1068. The segment covering 1073–1090 (HESASTSLKPSMGENSGL) has biased composition (polar residues). Residues 1091–1110 (TTSTEIEATTTSPTEAPSPA) show a composition bias toward low complexity. A 2-2 repeat occupies 1092–1152 (TSTEIEATTT…ATTQATNENG (61 aa)). Over residues 1111 to 1154 (VSSGTDVTTEPTDTREQPTTLSTTSKTNSESVATTQATNENGGK) the composition is skewed to polar residues. Composition is skewed to low complexity over residues 1155–1176 (SPSTDLTSSLTTGTSASTSANS) and 1197–1226 (SHSTSVTNSNSIVSNTPQTTLSQQVTSSSP).

The protein belongs to the ALS family. In terms of processing, N-glycosylated and O-glycosylated. Post-translationally, the GPI-anchor is attached to the protein in the endoplasmic reticulum and serves to target the protein to the cell surface. There, the glucosamine-inositol phospholipid moiety is cleaved off and the GPI-modified mannoprotein is covalently attached via its lipidless GPI glycan remnant to the 1,6-beta-glucan of the outer cell wall layer.

It is found in the cell membrane. Its subcellular location is the secreted. It localises to the cell wall. Major cell surface adhesion protein which mediates both yeast-to-host tissue adherence and yeast aggregation. Acts as a downstream effector of the EFG1 regulatory pathway. Required for rapamycin-induced aggregation of C.albicans. Binds glycans and mediates adherence to endothelial and epithelial cells, thereby playing an important role in the pathogenesis of C.albicans infections. In Candida albicans (Yeast), this protein is Agglutinin-like protein 1 (ALS1).